Consider the following 113-residue polypeptide: uncharacterized protein (113 aa).

It localises to the mitochondrion. This is an uncharacterized protein from Arabidopsis thaliana (Mouse-ear cress).